The primary structure comprises 340 residues: 4-hydroxythreonine-4-phosphate dehydrogenase (340 aa).

2 residues coordinate substrate: H141 and T142. Residues H171, H216, and H271 each contribute to the a divalent metal cation site. Substrate is bound by residues K279, N288, and R297.

This sequence belongs to the PdxA family. As to quaternary structure, homodimer. The cofactor is Zn(2+). Requires Mg(2+) as cofactor. Co(2+) is required as a cofactor.

It localises to the cytoplasm. The enzyme catalyses 4-(phosphooxy)-L-threonine + NAD(+) = 3-amino-2-oxopropyl phosphate + CO2 + NADH. Its pathway is cofactor biosynthesis; pyridoxine 5'-phosphate biosynthesis; pyridoxine 5'-phosphate from D-erythrose 4-phosphate: step 4/5. Its function is as follows. Catalyzes the NAD(P)-dependent oxidation of 4-(phosphooxy)-L-threonine (HTP) into 2-amino-3-oxo-4-(phosphooxy)butyric acid which spontaneously decarboxylates to form 3-amino-2-oxopropyl phosphate (AHAP). The sequence is that of 4-hydroxythreonine-4-phosphate dehydrogenase from Desulforapulum autotrophicum (strain ATCC 43914 / DSM 3382 / VKM B-1955 / HRM2) (Desulfobacterium autotrophicum).